The sequence spans 138 residues: Basic phospholipase A2 vurtoxin (138 aa).

The signal sequence occupies residues 1 to 16; the sequence is MRTLWIVAVCLIGVEG. 7 cysteine pairs are disulfide-bonded: cysteine 42–cysteine 131, cysteine 44–cysteine 60, cysteine 59–cysteine 111, cysteine 65–cysteine 138, cysteine 66–cysteine 104, cysteine 73–cysteine 97, and cysteine 91–cysteine 102. Residues tyrosine 43, glycine 45, and glycine 47 each contribute to the Ca(2+) site. Residue histidine 63 is part of the active site. Residue aspartate 64 participates in Ca(2+) binding. Aspartate 105 is an active-site residue.

Ca(2+) is required as a cofactor. In terms of tissue distribution, expressed by the venom gland.

It is found in the secreted. The enzyme catalyses a 1,2-diacyl-sn-glycero-3-phosphocholine + H2O = a 1-acyl-sn-glycero-3-phosphocholine + a fatty acid + H(+). Its function is as follows. Snake venom phospholipase A2 that may have a strong anticoagulant activity. Is able to suppress the acetylcholine (ACh)-evoked current mediated by alpha-7 (CHRNA7)-similar nAChRs in L.stagnalis neurons (IC(50)=10.5 uM) and to compete with alpha-bungarotoxin for binding to muscle- and alpha-7 neuronal nAChR types, as well as to AChBPs. In inhibition of alpha-bungarotoxin binding, this toxin is mostly active against T.californica nAChR (IC(50)=0.26 uM), it is moderately active against human alpha-7 nAChR (IC(50)=14 uM), and is not active against L.stagnalis and A.californica AChBP (IC(50)&gt;30 uM). In Vipera renardi (Steppe viper), this protein is Basic phospholipase A2 vurtoxin.